Here is a 197-residue protein sequence, read N- to C-terminus: Nucleoid occlusion factor SlmA (197 aa).

The HTH tetR-type domain maps to 7–67; it reads INRREHILQC…GLIDFIEESL (61 aa). The H-T-H motif DNA-binding region spans 30–49; that stretch reads TTAKLAAEVGVSEAALYRHF.

This sequence belongs to the nucleoid occlusion factor SlmA family. Homodimer. Interacts with FtsZ.

The protein resides in the cytoplasm. It is found in the nucleoid. In terms of biological role, required for nucleoid occlusion (NO) phenomenon, which prevents Z-ring formation and cell division over the nucleoid. Acts as a DNA-associated cell division inhibitor that binds simultaneously chromosomal DNA and FtsZ, and disrupts the assembly of FtsZ polymers. SlmA-DNA-binding sequences (SBS) are dispersed on non-Ter regions of the chromosome, preventing FtsZ polymerization at these regions. The polypeptide is Nucleoid occlusion factor SlmA (Shewanella woodyi (strain ATCC 51908 / MS32)).